Reading from the N-terminus, the 85-residue chain is Beta-insect depressant toxin LqhIT2 (85 aa).

A signal peptide spans 1–21 (MKLLLLLIVSASMLIESLVNA). In terms of domain architecture, LCN-type CS-alpha/beta spans 22–82 (DGYIKRRDGC…TWKSETNTCG (61 aa)). 4 cysteine pairs are disulfide-bonded: Cys31–Cys81, Cys35–Cys56, Cys42–Cys63, and Cys46–Cys65. Glycine amide is present on Gly82.

It belongs to the long (4 C-C) scorpion toxin superfamily. Sodium channel inhibitor family. Beta subfamily. Expressed by the venom gland.

It is found in the secreted. Functionally, depressant insect beta-toxins cause a transient contraction paralysis followed by a slow flaccid paralysis. They bind voltage-independently at site-4 of sodium channels (Nav) and shift the voltage of activation toward more negative potentials thereby affecting sodium channel activation and promoting spontaneous and repetitive firing. This toxin is active only on insects. In Leiurus hebraeus (Hebrew deathstalker scorpion), this protein is Beta-insect depressant toxin LqhIT2.